The primary structure comprises 190 residues: MNNYIFIVSAPSGAGKSSLLKAFLATDIGKDNYAVAISHTTREPRVGEINSREYYFVTVAEFEQLLSQDGFIEYAKVFKNYYGTSKAELDRLLALGKNIILEIDWQGAQQTRAIYGDRAKSIFILPPSLDELRKRLEKRNTDSKETIDYRMEQAQSEISHADEYDYLLVNDDFSQSLEQFCKYFEQNIQS.

Residues 3–185 (NYIFIVSAPS…SLEQFCKYFE (183 aa)) form the Guanylate kinase-like domain. 10 to 17 (APSGAGKS) provides a ligand contact to ATP.

Belongs to the guanylate kinase family.

The protein resides in the cytoplasm. It carries out the reaction GMP + ATP = GDP + ADP. Essential for recycling GMP and indirectly, cGMP. This chain is Guanylate kinase, found in Francisella tularensis subsp. tularensis (strain FSC 198).